The chain runs to 517 residues: GMP synthase [glutamine-hydrolyzing] (517 aa).

The Glutamine amidotransferase type-1 domain occupies 11–202 (KIIVLDFGSQ…AFNVCDAKAN (192 aa)). Cys88 serves as the catalytic Nucleophile. Catalysis depends on residues His176 and Glu178. The region spanning 203–392 (WTMDDFIEMQ…LGIPHDLVWR (190 aa)) is the GMPS ATP-PPase domain. 230-236 (SGGVDSS) contacts ATP.

In terms of assembly, homodimer.

The enzyme catalyses XMP + L-glutamine + ATP + H2O = GMP + L-glutamate + AMP + diphosphate + 2 H(+). It functions in the pathway purine metabolism; GMP biosynthesis; GMP from XMP (L-Gln route): step 1/1. Its function is as follows. Catalyzes the synthesis of GMP from XMP. The chain is GMP synthase [glutamine-hydrolyzing] from Lactobacillus gasseri (strain ATCC 33323 / DSM 20243 / BCRC 14619 / CIP 102991 / JCM 1131 / KCTC 3163 / NCIMB 11718 / NCTC 13722 / AM63).